A 147-amino-acid chain; its full sequence is Hemoglobin subunit epsilon (147 aa).

Residues 3–147 form the Globin domain; sequence HFTAEEKAAI…VAIALGHKYH (145 aa). Phosphoserine is present on residues S14 and S51. Heme b-binding residues include H64 and H93.

Belongs to the globin family. In terms of assembly, heterotetramer of two alpha chains and two epsilon chains in early embryonic hemoglobin Gower-2; two zeta chains and two epsilon chains in early embryonic hemoglobin Gower-1. Red blood cells.

In terms of biological role, the epsilon chain is a beta-type chain of early mammalian embryonic hemoglobin. The polypeptide is Hemoglobin subunit epsilon (HBE1) (Leontopithecus rosalia (Golden lion tamarin)).